The primary structure comprises 91 residues: Large ribosomal subunit protein eL31 (91 aa).

It belongs to the eukaryotic ribosomal protein eL31 family.

The protein is Large ribosomal subunit protein eL31 of Pyrobaculum neutrophilum (strain DSM 2338 / JCM 9278 / NBRC 100436 / V24Sta) (Thermoproteus neutrophilus).